Consider the following 440-residue polypeptide: Translation initiation factor eIF2B subunit gamma (440 aa).

This sequence belongs to the eIF-2B gamma/epsilon subunits family. As to quaternary structure, component of the translation initiation factor 2B (eIF2B) complex which is a heterodecamer of two sets of five different subunits: alpha, beta, gamma, delta and epsilon. Subunits alpha, beta and delta comprise a regulatory subcomplex and subunits epsilon and gamma comprise a catalytic subcomplex. Within the complex, the hexameric regulatory complex resides at the center, with the two heterodimeric catalytic subcomplexes bound on opposite sides.

It is found in the cytoplasm. The protein resides in the cytosol. Functionally, acts as a component of the translation initiation factor 2B (eIF2B) complex, which catalyzes the exchange of GDP for GTP on the eukaryotic initiation factor 2 (eIF2) complex gamma subunit. Its guanine nucleotide exchange factor activity is repressed when bound to eIF2 complex phosphorylated on the alpha subunit, thereby limiting the amount of methionyl-initiator methionine tRNA available to the ribosome and consequently global translation is repressed. In Dictyostelium discoideum (Social amoeba), this protein is Translation initiation factor eIF2B subunit gamma (eif2b3).